The following is a 169-amino-acid chain: Ribosome maturation factor RimM (169 aa).

The PRC barrel domain maps to 97 to 169 (EDEYYWADLV…TITADWGLDY (73 aa)).

Belongs to the RimM family. Binds ribosomal protein uS19.

The protein resides in the cytoplasm. Its function is as follows. An accessory protein needed during the final step in the assembly of 30S ribosomal subunit, possibly for assembly of the head region. Essential for efficient processing of 16S rRNA. May be needed both before and after RbfA during the maturation of 16S rRNA. It has affinity for free ribosomal 30S subunits but not for 70S ribosomes. This Neisseria gonorrhoeae (strain ATCC 700825 / FA 1090) protein is Ribosome maturation factor RimM.